Here is a 185-residue protein sequence, read N- to C-terminus: Elongation factor P (185 aa).

Belongs to the elongation factor P family.

The protein localises to the cytoplasm. It participates in protein biosynthesis; polypeptide chain elongation. Its function is as follows. Involved in peptide bond synthesis. Stimulates efficient translation and peptide-bond synthesis on native or reconstituted 70S ribosomes in vitro. Probably functions indirectly by altering the affinity of the ribosome for aminoacyl-tRNA, thus increasing their reactivity as acceptors for peptidyl transferase. The polypeptide is Elongation factor P (Synechococcus sp. (strain JA-3-3Ab) (Cyanobacteria bacterium Yellowstone A-Prime)).